The primary structure comprises 144 residues: MELNSIKPGSGSKHAKRRVGRGIGSGLGKTAGRGHKGQKSRAGGYHKVGFEGGQMPLQRRLPKRGFKSHLLKFNAEITLGQLQVLAVDEVDLLLLKQIGLVGELAKVVKVVKSGELTRAVVLKGIGATAGAKAAIEAAGGSLAA.

A disordered region spans residues 1 to 51 (MELNSIKPGSGSKHAKRRVGRGIGSGLGKTAGRGHKGQKSRAGGYHKVGFE). The segment covering 21–31 (RGIGSGLGKTA) has biased composition (gly residues).

Belongs to the universal ribosomal protein uL15 family. As to quaternary structure, part of the 50S ribosomal subunit.

Functionally, binds to the 23S rRNA. The chain is Large ribosomal subunit protein uL15 from Leptothrix cholodnii (strain ATCC 51168 / LMG 8142 / SP-6) (Leptothrix discophora (strain SP-6)).